We begin with the raw amino-acid sequence, 246 residues long: Exosome complex component Rrp41 (246 aa).

This sequence belongs to the RNase PH family. Rrp41 subfamily. As to quaternary structure, component of the archaeal exosome complex. Forms a hexameric ring-like arrangement composed of 3 Rrp41-Rrp42 heterodimers. The hexameric ring associates with a trimer of Rrp4 and/or Csl4 subunits.

The protein localises to the cytoplasm. Functionally, catalytic component of the exosome, which is a complex involved in RNA degradation. Has 3'-&gt;5' exoribonuclease activity. Can also synthesize heteromeric RNA-tails. In Pyrobaculum arsenaticum (strain DSM 13514 / JCM 11321 / PZ6), this protein is Exosome complex component Rrp41.